The primary structure comprises 119 residues: MEKIAFVFSHAPHGTSFGKEGLDVILGVSSIIKKISLFFIGDGVLQILKHSKSENILARNYTSSFRILSIYDIKNFYCCKSSLIDRGLYSHNQFILKVNILNSYFFRIKLDDHDAIINF.

This sequence belongs to the DsrF/TusC family. In terms of assembly, heterohexamer, formed by a dimer of trimers. The hexameric TusBCD complex contains 2 copies each of TusB, TusC and TusD. The TusBCD complex interacts with TusE.

The protein localises to the cytoplasm. Its function is as follows. Part of a sulfur-relay system required for 2-thiolation of 5-methylaminomethyl-2-thiouridine (mnm(5)s(2)U) at tRNA wobble positions. This is Protein TusC from Buchnera aphidicola subsp. Schizaphis graminum (strain Sg).